A 147-amino-acid polypeptide reads, in one-letter code: MSLATKLRRVRKSPPEGWDLIEPTLEQFEAKMREAETEPHEGKRKTEINWPIFRIHHQRSRYVYDMYYKKAEISRELYEFCLTAKFADAALIAKWKKQGYENLCCVKCVNTRDSNFGTACICRVPKSKLDAERVIECVHCGCHGCSG.

The short motif at 8-12 is the Nuclear localization signal element; that stretch reads RRVRK.

It belongs to the BUD31 (G10) family. As to quaternary structure, identified in the spliceosome C complex.

Its subcellular location is the nucleus. Its function is as follows. Involved in pre-mRNA splicing process. In Caenorhabditis elegans, this protein is Protein BUD31 homolog.